Reading from the N-terminus, the 286-residue chain is MLLRGIPAAEKILQRLKEEISQSPTSPGLAVVLIGNDPASEVYVGMKVKKATEIGIISKAHKLPSDSTLSSVLKLIERLNQDPSIHGILVQLPLPKHLDSEVILQAISPDKDVDGLHPVNMGKLLLGNFDGLLPCTPAGIIELLNYYEIPLRGRHAAIVGRSNIVGKPLAALMMQKHPQTNCTVTVLHSQSENLPEILKTADIIIAALGAPLFIKETMVAPHAVIVDVGTTRVPADNAKGYTLLGDVDFNNVVTKCAAITPVPGGVGPMTVAMLMSNTWRCYQNFS.

NADP(+) contacts are provided by residues 160 to 162 (GRS), Ser189, and Thr230.

Belongs to the tetrahydrofolate dehydrogenase/cyclohydrolase family. In terms of assembly, homodimer.

The catalysed reaction is (6R)-5,10-methylene-5,6,7,8-tetrahydrofolate + NADP(+) = (6R)-5,10-methenyltetrahydrofolate + NADPH. It carries out the reaction (6R)-5,10-methenyltetrahydrofolate + H2O = (6R)-10-formyltetrahydrofolate + H(+). Its pathway is one-carbon metabolism; tetrahydrofolate interconversion. Catalyzes the oxidation of 5,10-methylenetetrahydrofolate to 5,10-methenyltetrahydrofolate and then the hydrolysis of 5,10-methenyltetrahydrofolate to 10-formyltetrahydrofolate. The protein is Bifunctional protein FolD of Chlamydia pneumoniae (Chlamydophila pneumoniae).